We begin with the raw amino-acid sequence, 220 residues long: Small ribosomal subunit protein uS3 (220 aa).

A KH type-2 domain is found at 39–107; the sequence is IREHVEGRLK…RVHINISEIK (69 aa).

Belongs to the universal ribosomal protein uS3 family. As to quaternary structure, part of the 30S ribosomal subunit. Forms a tight complex with proteins S10 and S14.

Functionally, binds the lower part of the 30S subunit head. Binds mRNA in the 70S ribosome, positioning it for translation. This Shouchella clausii (strain KSM-K16) (Alkalihalobacillus clausii) protein is Small ribosomal subunit protein uS3.